The primary structure comprises 375 residues: 23S rRNA (uracil(747)-C(5))-methyltransferase RlmC (375 aa).

[4Fe-4S] cluster contacts are provided by C3, C11, C14, and C87. 4 residues coordinate S-adenosyl-L-methionine: Q212, F241, E262, and N307. C334 acts as the Nucleophile in catalysis.

The protein belongs to the class I-like SAM-binding methyltransferase superfamily. RNA M5U methyltransferase family. RlmC subfamily.

The enzyme catalyses uridine(747) in 23S rRNA + S-adenosyl-L-methionine = 5-methyluridine(747) in 23S rRNA + S-adenosyl-L-homocysteine + H(+). Catalyzes the formation of 5-methyl-uridine at position 747 (m5U747) in 23S rRNA. This is 23S rRNA (uracil(747)-C(5))-methyltransferase RlmC from Shigella dysenteriae serotype 1 (strain Sd197).